A 385-amino-acid chain; its full sequence is Branched-chain-amino-acid aminotransferase, cytosolic (385 aa).

The residue at position 221 (Lys-221) is an N6-(pyridoxal phosphate)lysine.

The protein belongs to the class-IV pyridoxal-phosphate-dependent aminotransferase family. Homodimer. Requires pyridoxal 5'-phosphate as cofactor. Expressed in muscles.

It localises to the cytoplasm. The enzyme catalyses L-leucine + 2-oxoglutarate = 4-methyl-2-oxopentanoate + L-glutamate. It carries out the reaction L-isoleucine + 2-oxoglutarate = (S)-3-methyl-2-oxopentanoate + L-glutamate. It catalyses the reaction L-valine + 2-oxoglutarate = 3-methyl-2-oxobutanoate + L-glutamate. Functionally, catalyzes the first reaction in the catabolism of the essential branched chain amino acids leucine, isoleucine, and valine. The protein is Branched-chain-amino-acid aminotransferase, cytosolic (BCAT1) of Ovis aries (Sheep).